The chain runs to 216 residues: GTP cyclohydrolase 1 (216 aa).

Zn(2+) is bound by residues C109, H112, and C180.

Belongs to the GTP cyclohydrolase I family. In terms of assembly, toroid-shaped homodecamer, composed of two pentamers of five dimers.

The catalysed reaction is GTP + H2O = 7,8-dihydroneopterin 3'-triphosphate + formate + H(+). It participates in cofactor biosynthesis; 7,8-dihydroneopterin triphosphate biosynthesis; 7,8-dihydroneopterin triphosphate from GTP: step 1/1. This Wigglesworthia glossinidia brevipalpis protein is GTP cyclohydrolase 1.